The chain runs to 711 residues: Ribosomal RNA large subunit methyltransferase K/L (711 aa).

The 112-residue stretch at 43–154 (TLYRTLLWSR…RENLVISLDL (112 aa)) folds into the THUMP domain.

The protein belongs to the methyltransferase superfamily. RlmKL family.

It localises to the cytoplasm. The catalysed reaction is guanosine(2445) in 23S rRNA + S-adenosyl-L-methionine = N(2)-methylguanosine(2445) in 23S rRNA + S-adenosyl-L-homocysteine + H(+). It catalyses the reaction guanosine(2069) in 23S rRNA + S-adenosyl-L-methionine = N(2)-methylguanosine(2069) in 23S rRNA + S-adenosyl-L-homocysteine + H(+). Functionally, specifically methylates the guanine in position 2445 (m2G2445) and the guanine in position 2069 (m7G2069) of 23S rRNA. This Haemophilus influenzae (strain PittGG) protein is Ribosomal RNA large subunit methyltransferase K/L.